Consider the following 380-residue polypeptide: Cytochrome b (380 aa).

The next 4 membrane-spanning stretches (helical) occupy residues 34–54, 78–99, 114–134, and 179–199; these read FGSL…LLAA, WLIR…YLHI, WNTG…GYVL, and FFAL…IHLT. Heme b contacts are provided by His-84 and His-98. Residues His-183 and His-197 each contribute to the heme b site. His-202 serves as a coordination point for a ubiquinone. The next 4 membrane-spanning stretches (helical) occupy residues 227–247, 289–309, 321–341, and 348–368; these read LKDI…ALFS, LGGV…PFLH, LSQL…WVGS, and FIII…VLFP.

This sequence belongs to the cytochrome b family. In terms of assembly, the cytochrome bc1 complex contains 11 subunits: 3 respiratory subunits (MT-CYB, CYC1 and UQCRFS1), 2 core proteins (UQCRC1 and UQCRC2) and 6 low-molecular weight proteins (UQCRH/QCR6, UQCRB/QCR7, UQCRQ/QCR8, UQCR10/QCR9, UQCR11/QCR10 and a cleavage product of UQCRFS1). This cytochrome bc1 complex then forms a dimer. The cofactor is heme b.

The protein localises to the mitochondrion inner membrane. Functionally, component of the ubiquinol-cytochrome c reductase complex (complex III or cytochrome b-c1 complex) that is part of the mitochondrial respiratory chain. The b-c1 complex mediates electron transfer from ubiquinol to cytochrome c. Contributes to the generation of a proton gradient across the mitochondrial membrane that is then used for ATP synthesis. The chain is Cytochrome b (MT-CYB) from Pharomachrus antisianus (Crested quetzal).